The primary structure comprises 369 residues: Phosphoribosyl pyrophosphate synthase-associated protein 2 (369 aa).

N-acetylmethionine is present on Met-1. Ser-219, Ser-227, and Ser-233 each carry phosphoserine.

It belongs to the ribose-phosphate pyrophosphokinase family. As to quaternary structure, binds to PRPS1 and PRPS2.

In terms of biological role, seems to play a negative regulatory role in 5-phosphoribose 1-diphosphate synthesis. This chain is Phosphoribosyl pyrophosphate synthase-associated protein 2 (PRPSAP2), found in Bos taurus (Bovine).